We begin with the raw amino-acid sequence, 295 residues long: MTKILGSDLIKRGMAQMQKGGVIMDVVNAEQARIAEAAGAVAVMALERVPSDIRAAGGVARMANTAIVREVMEAVSIPVMAKARIGHIVEARVLEAMGVDYIDESEVLTPADEEFHLLKSDYTVPFVCGCRDLGEALRRIGEGASMLRTKGEPGTGNVVEAVRHLRKVNAQLRKVINMSHDELMTEAKHLGAPFELLLQIKTLGKLPVVNFAAGGIATPADAALMMELGADGVFVGSGIFKSENPEKFAKAIVQATTHYQDYDLIARLSADLGEPMRGLEISELAVQDRMQERGW.

D25 lines the D-ribose 5-phosphate pocket. Catalysis depends on K82, which acts as the Schiff-base intermediate with D-ribose 5-phosphate. D-ribose 5-phosphate is bound at residue G154. A D-glyceraldehyde 3-phosphate-binding site is contributed by R166. Residues G215 and 236-237 (GS) contribute to the D-ribose 5-phosphate site.

It belongs to the PdxS/SNZ family. In the presence of PdxT, forms a dodecamer of heterodimers.

The enzyme catalyses aldehydo-D-ribose 5-phosphate + D-glyceraldehyde 3-phosphate + L-glutamine = pyridoxal 5'-phosphate + L-glutamate + phosphate + 3 H2O + H(+). It functions in the pathway cofactor biosynthesis; pyridoxal 5'-phosphate biosynthesis. Catalyzes the formation of pyridoxal 5'-phosphate from ribose 5-phosphate (RBP), glyceraldehyde 3-phosphate (G3P) and ammonia. The ammonia is provided by the PdxT subunit. Can also use ribulose 5-phosphate and dihydroxyacetone phosphate as substrates, resulting from enzyme-catalyzed isomerization of RBP and G3P, respectively. This Actinobacillus pleuropneumoniae serotype 5b (strain L20) protein is Pyridoxal 5'-phosphate synthase subunit PdxS.